Here is a 77-residue protein sequence, read N- to C-terminus: MIYKVFYQETKERSPRRETTRTLYLDIDASSELEGRITARQLVEENRPEYNIEYIELLSDKLLDYEKETGAFEITEF.

The protein belongs to the RNA polymerase subunit epsilon family. RNAP is composed of a core of 2 alpha, a beta and a beta' subunit. The core is associated with a delta subunit, and at least one of epsilon or omega. When a sigma factor is associated with the core the holoenzyme is formed, which can initiate transcription.

It catalyses the reaction RNA(n) + a ribonucleoside 5'-triphosphate = RNA(n+1) + diphosphate. In terms of biological role, a non-essential component of RNA polymerase (RNAP). This Streptococcus pneumoniae serotype 2 (strain D39 / NCTC 7466) protein is DNA-directed RNA polymerase subunit epsilon.